We begin with the raw amino-acid sequence, 273 residues long: Chondrolectin (273 aa).

An N-terminal signal peptide occupies residues 1 to 21; the sequence is MSRVVSLLLGAALLCGHGAFC. The Extracellular segment spans residues 22–216; it reads RRVVSGQKVC…VVTEAGIIPN (195 aa). The 145-residue stretch at 35 to 179 folds into the C-type lectin domain; it reads FKHPCYKMAY…CNMKHNYICK (145 aa). 2 disulfides stabilise this stretch: Cys61–Cys178 and Cys144–Cys170. N-linked (GlcNAc...) asparagine glycosylation is present at Asn86. The helical transmembrane segment at 217-237 threads the bilayer; it reads LIYVVIPTIPLLLLILVAFGT. The Cytoplasmic segment spans residues 238–273; that stretch reads CCFQMLHKSKGRTKTSPNQSTLWISKSTRKESGMEV. Residues 248 to 273 are disordered; that stretch reads GRTKTSPNQSTLWISKSTRKESGMEV. Over residues 251–263 the composition is skewed to polar residues; that stretch reads KTSPNQSTLWISK.

Interacts with RABGGTB. N-glycosylated. In terms of tissue distribution, found in spleen, testis, prostate and fetal liver. Expression limited to vascular muscle of testis, smooth muscle of prostate stroma, heart muscle, skeletal muscle, crypts of small intestine, and red pulp of spleen. B lymphocytes express isoform 2 only; peripheral blood T lymphocytes express isoform 3 only; granulocytes and monocytes express neither isoform 2 nor isoform 3. During development of T lymphocytes, bone marrow progenitor cells express isoform 2 only; thymocytes at different stages of maturation express predominantly isoform 2 and weakly isoform 3, and mature thymocytes express only isoform 2.

It localises to the cytoplasm. The protein resides in the membrane. The protein localises to the endoplasmic reticulum. Its subcellular location is the endoplasmic reticulum membrane. Its function is as follows. May play a role in the development of the nervous system such as in neurite outgrowth and elongation. May be involved in motor axon growth and guidance. This Homo sapiens (Human) protein is Chondrolectin (CHODL).